The sequence spans 148 residues: uncharacterized protein (148 aa).

It to A.tumefaciens Atu0565/AGR_C_992.

This is an uncharacterized protein from Rhizobium meliloti (strain 1021) (Ensifer meliloti).